Consider the following 31-residue polypeptide: Electron transfer flavoprotein-ubiquinone oxidoreductase (31 aa).

An FAD-binding site is contributed by 11–25 (VVIVGAGGAGLSAAI).

Monomer. [4Fe-4S] cluster is required as a cofactor. It depends on FAD as a cofactor.

The catalysed reaction is a ubiquinone + reduced [electron-transfer flavoprotein] = a ubiquinol + oxidized [electron-transfer flavoprotein] + H(+). Its function is as follows. Accepts electrons from ETF and reduces ubiquinone. The polypeptide is Electron transfer flavoprotein-ubiquinone oxidoreductase (Paracoccus denitrificans).